A 56-amino-acid chain; its full sequence is Potassium channel toxin alpha-KTx 9.1 (56 aa).

Positions 1 to 28 (MSRLFTLVLIVLAMNVMMAIISDPVVEA) are cleaved as a signal peptide. 3 cysteine pairs are disulfide-bonded: Cys31/Cys47, Cys34/Cys52, and Cys38/Cys54.

Expressed by the venom gland.

It is found in the secreted. Its function is as follows. Blocks small conductance calcium-activated potassium channels (KCNN, SK). Weakly inhibits the Kv7.1/KCNQ1 channel (10 uM of the toxin inhibits currents by 23.3%). Low toxicity by intracerebroventricular injection into mice. This is Potassium channel toxin alpha-KTx 9.1 from Olivierus martensii (Manchurian scorpion).